The sequence spans 211 residues: Pyridoxine/pyridoxamine 5'-phosphate oxidase (211 aa).

Substrate contacts are provided by residues arginine 7–tyrosine 10 and lysine 65. Residues arginine 60–lysine 65, tyrosine 75–threonine 76, arginine 81, lysine 82, and glutamine 104 each bind FMN. The substrate site is built by tyrosine 122, arginine 126, and serine 130. FMN contacts are provided by residues glutamine 139–serine 140 and tryptophan 184. A substrate-binding site is contributed by arginine 190–histidine 192. Arginine 194 provides a ligand contact to FMN.

Belongs to the pyridoxamine 5'-phosphate oxidase family. As to quaternary structure, homodimer. It depends on FMN as a cofactor.

It carries out the reaction pyridoxamine 5'-phosphate + O2 + H2O = pyridoxal 5'-phosphate + H2O2 + NH4(+). The catalysed reaction is pyridoxine 5'-phosphate + O2 = pyridoxal 5'-phosphate + H2O2. The protein operates within cofactor metabolism; pyridoxal 5'-phosphate salvage; pyridoxal 5'-phosphate from pyridoxamine 5'-phosphate: step 1/1. Its pathway is cofactor metabolism; pyridoxal 5'-phosphate salvage; pyridoxal 5'-phosphate from pyridoxine 5'-phosphate: step 1/1. Functionally, catalyzes the oxidation of either pyridoxine 5'-phosphate (PNP) or pyridoxamine 5'-phosphate (PMP) into pyridoxal 5'-phosphate (PLP). This Vibrio campbellii (strain ATCC BAA-1116) protein is Pyridoxine/pyridoxamine 5'-phosphate oxidase.